The following is a 434-amino-acid chain: E3 ubiquitin-protein ligase siah-1 (434 aa).

The disordered stretch occupies residues 27–88; that stretch reads FEEDENAGPE…NGNTPSVTIP (62 aa). Residues 43 to 55 are compositionally biased toward low complexity; the sequence is SSSSASSQRSSAS. Residues 74 to 88 show a composition bias toward polar residues; sequence MSNNQNGNTPSVTIP. Residues 171 to 206 form an RING-type; degenerate zinc finger; sequence CPVCLEYMLPPYMQCPSGHLVCSNCRPKLQCCPTCR. Residues 220–415 are SBD; sequence IANTVRFPCK…LGINVTISRI (196 aa). An SIAH-type; degenerate zinc finger spans residues 223–283; it reads TVRFPCKFSN…VMDHLKKVHK (61 aa). Positions 228, 235, 247, 251, 258, 265, 277, and 282 each coordinate Zn(2+).

Belongs to the SINA (Seven in absentia) family. Interacts with tir-1.

The enzyme catalyses S-ubiquitinyl-[E2 ubiquitin-conjugating enzyme]-L-cysteine + [acceptor protein]-L-lysine = [E2 ubiquitin-conjugating enzyme]-L-cysteine + N(6)-ubiquitinyl-[acceptor protein]-L-lysine.. The protein operates within protein modification; protein ubiquitination. In terms of biological role, E3 ubiquitin-protein ligase that mediates ubiquitination and subsequent proteasomal degradation of target proteins. E3 ubiquitin ligases accept ubiquitin from an E2 ubiquitin-conjugating enzyme in the form of a thioester and then directly transfers the ubiquitin to targeted substrates. It probably triggers the ubiquitin-mediated degradation of different substrates. This chain is E3 ubiquitin-protein ligase siah-1, found in Caenorhabditis briggsae.